The following is a 184-amino-acid chain: Probable chorismate pyruvate-lyase 1 (184 aa).

3 residues coordinate substrate: R70, L108, and E166.

This sequence belongs to the UbiC family.

Its subcellular location is the cytoplasm. It carries out the reaction chorismate = 4-hydroxybenzoate + pyruvate. The protein operates within cofactor biosynthesis; ubiquinone biosynthesis. Functionally, removes the pyruvyl group from chorismate, with concomitant aromatization of the ring, to provide 4-hydroxybenzoate (4HB) for the ubiquinone pathway. This chain is Probable chorismate pyruvate-lyase 1, found in Burkholderia pseudomallei (strain 1710b).